Consider the following 614-residue polypeptide: Bifunctional 3'-phosphoadenosine 5'-phosphosulfate synthase 2 (614 aa).

The segment at 1 to 215 is adenylyl-sulfate kinase; sequence MSGIKKQKTE…VVELLQEQNI (215 aa). ATP is bound at residue 52-57; sequence GAGKTT. Adenosine 5'-phosphosulfate is bound by residues 79–82, phenylalanine 91, 96–99, 122–123, lysine 161, and 174–175; these read DNVR, REEN, IS, and GF. Residues serine 197, 409 to 412, 511 to 515, and alanine 553 each bind ATP; these read QLRN and GRDPA. The segment at 224–614 is sulfate adenylyltransferase; that stretch reads IHELFVPENK…TDYYRSLEKN (391 aa).

In the N-terminal section; belongs to the APS kinase family. This sequence in the C-terminal section; belongs to the sulfate adenylyltransferase family. As to expression, expressed in cartilage and adrenal gland.

It carries out the reaction sulfate + ATP + H(+) = adenosine 5'-phosphosulfate + diphosphate. The catalysed reaction is adenosine 5'-phosphosulfate + ATP = 3'-phosphoadenylyl sulfate + ADP + H(+). It participates in sulfur metabolism; sulfate assimilation. Functionally, bifunctional enzyme with both ATP sulfurylase and APS kinase activity, which mediates two steps in the sulfate activation pathway. The first step is the transfer of a sulfate group to ATP to yield adenosine 5'-phosphosulfate (APS), and the second step is the transfer of a phosphate group from ATP to APS yielding 3'-phosphoadenylylsulfate/PAPS, the activated sulfate donor used by sulfotransferases. In mammals, PAPS is the sole source of sulfate while APS appears to only be an intermediate in the sulfate-activation pathway. Plays indirectly an important role in skeletogenesis during postnatal growth. In Homo sapiens (Human), this protein is Bifunctional 3'-phosphoadenosine 5'-phosphosulfate synthase 2 (PAPSS2).